Here is a 293-residue protein sequence, read N- to C-terminus: Elongation factor Ts (293 aa).

Residues 79–82 are involved in Mg(2+) ion dislocation from EF-Tu; the sequence is TDFV.

It belongs to the EF-Ts family.

Its subcellular location is the cytoplasm. In terms of biological role, associates with the EF-Tu.GDP complex and induces the exchange of GDP to GTP. It remains bound to the aminoacyl-tRNA.EF-Tu.GTP complex up to the GTP hydrolysis stage on the ribosome. This chain is Elongation factor Ts, found in Macrococcus caseolyticus (strain JCSC5402) (Macrococcoides caseolyticum).